A 122-amino-acid chain; its full sequence is Large ribosomal subunit protein uL14 (122 aa).

It belongs to the universal ribosomal protein uL14 family. In terms of assembly, part of the 50S ribosomal subunit. Forms a cluster with proteins L3 and L19. In the 70S ribosome, L14 and L19 interact and together make contacts with the 16S rRNA in bridges B5 and B8.

In terms of biological role, binds to 23S rRNA. Forms part of two intersubunit bridges in the 70S ribosome. This is Large ribosomal subunit protein uL14 from Rhizobium etli (strain CIAT 652).